The sequence spans 568 residues: Proline--tRNA ligase (568 aa).

It belongs to the class-II aminoacyl-tRNA synthetase family. ProS type 1 subfamily. In terms of assembly, homodimer.

It is found in the cytoplasm. The enzyme catalyses tRNA(Pro) + L-proline + ATP = L-prolyl-tRNA(Pro) + AMP + diphosphate. Functionally, catalyzes the attachment of proline to tRNA(Pro) in a two-step reaction: proline is first activated by ATP to form Pro-AMP and then transferred to the acceptor end of tRNA(Pro). As ProRS can inadvertently accommodate and process non-cognate amino acids such as alanine and cysteine, to avoid such errors it has two additional distinct editing activities against alanine. One activity is designated as 'pretransfer' editing and involves the tRNA(Pro)-independent hydrolysis of activated Ala-AMP. The other activity is designated 'posttransfer' editing and involves deacylation of mischarged Ala-tRNA(Pro). The misacylated Cys-tRNA(Pro) is not edited by ProRS. This chain is Proline--tRNA ligase, found in Halothermothrix orenii (strain H 168 / OCM 544 / DSM 9562).